The sequence spans 445 residues: N-succinylarginine dihydrolase (445 aa).

Substrate-binding positions include 19–28, Asn110, and 137–138; these read AGLSFGNVAS and HR. The active site involves Glu174. Arg214 contributes to the substrate binding site. His250 is a catalytic residue. Asp252 and Asn363 together coordinate substrate. Residue Cys369 is the Nucleophile of the active site.

This sequence belongs to the succinylarginine dihydrolase family. As to quaternary structure, homodimer.

The enzyme catalyses N(2)-succinyl-L-arginine + 2 H2O + 2 H(+) = N(2)-succinyl-L-ornithine + 2 NH4(+) + CO2. It functions in the pathway amino-acid degradation; L-arginine degradation via AST pathway; L-glutamate and succinate from L-arginine: step 2/5. Functionally, catalyzes the hydrolysis of N(2)-succinylarginine into N(2)-succinylornithine, ammonia and CO(2). This chain is N-succinylarginine dihydrolase, found in Shewanella piezotolerans (strain WP3 / JCM 13877).